The chain runs to 162 residues: Peptidyl-prolyl cis-trans isomerase (162 aa).

A PPIase cyclophilin-type domain is found at 5-161 (FFDVIANGQP…ARIVIDKCGT (157 aa)).

This sequence belongs to the cyclophilin-type PPIase family. PPIase A subfamily.

It is found in the cytoplasm. It catalyses the reaction [protein]-peptidylproline (omega=180) = [protein]-peptidylproline (omega=0). Its activity is regulated as follows. Binds cyclosporin A (CsA). CsA mediates some of its effects via an inhibitory action on PPIase. In terms of biological role, PPIases accelerate the folding of proteins. It catalyzes the cis-trans isomerization of proline imidic peptide bonds in oligopeptides. In Schizosaccharomyces pombe (strain 972 / ATCC 24843) (Fission yeast), this protein is Peptidyl-prolyl cis-trans isomerase (ppi1).